The sequence spans 263 residues: Putative TATA-binding protein pB263R (263 aa).

It belongs to the asfivirus B263R family.

Its function is as follows. Putative TATA-binding protein. The sequence is that of Putative TATA-binding protein pB263R from Ornithodoros (relapsing fever ticks).